The primary structure comprises 127 residues: UPF0325 protein VIBHAR_03240 (127 aa).

Belongs to the UPF0325 family.

The sequence is that of UPF0325 protein VIBHAR_03240 from Vibrio campbellii (strain ATCC BAA-1116).